The following is a 323-amino-acid chain: AA9 family lytic polysaccharide monooxygenase A (323 aa).

An N-terminal signal peptide occupies residues methionine 1–alanine 19. Residues histidine 20 and histidine 90 each contribute to the Cu(2+) site. Residues cysteine 59 and cysteine 175 are joined by a disulfide bond. 2 residues coordinate O2: histidine 161 and glutamine 170. Tyrosine 172 lines the Cu(2+) pocket. Asparagine 215 is a glycosylation site (N-linked (GlcNAc...) asparagine). Positions alanine 287–leucine 323 constitute a CBM1 domain.

It belongs to the polysaccharide monooxygenase AA9 family. Requires Cu(2+) as cofactor.

The protein resides in the secreted. The enzyme catalyses [(1-&gt;4)-beta-D-glucosyl]n+m + reduced acceptor + O2 = 4-dehydro-beta-D-glucosyl-[(1-&gt;4)-beta-D-glucosyl]n-1 + [(1-&gt;4)-beta-D-glucosyl]m + acceptor + H2O.. In terms of biological role, lytic polysaccharide monooxygenase (LPMO) that depolymerizes crystalline and amorphous polysaccharides via the oxidation of scissile alpha- or beta-(1-4)-glycosidic bonds, yielding C1 and C4 oxidation products. Catalysis by LPMOs requires the reduction of the active-site copper from Cu(II) to Cu(I) by a reducing agent and H(2)O(2) or O(2) as a cosubstrate. The protein is AA9 family lytic polysaccharide monooxygenase A of Botryotinia fuckeliana (strain B05.10) (Noble rot fungus).